Reading from the N-terminus, the 271-residue chain is Protein FANTASTIC FOUR 1 (271 aa).

The FAF domain maps to 114–168 (NSFPPPLNSVNGFNNSRMVKSYKEDGRLVVQAIRVCSPPRCFVSERREGRLRLCL). The tract at residues 174–255 (NSQDAEEEFE…KRRCNENGCE (82 aa)) is disordered. Residues 177 to 224 (DAEEEFEEEDEDDQYDAEEEEEEEEEEEEEEEEEEEEEEEEEEEDEEG) show a composition bias toward acidic residues. Positions 237–247 (GNKKVSNRPKR) are enriched in basic residues.

This sequence belongs to the fantastic four family. As to expression, expressed in the shoot apex, stamens, anthers and young siliques. Detected in provascular and vascular tissue.

Able to repress WUS when constitutively overexpressed, but have no effect on CLV3. The protein is Protein FANTASTIC FOUR 1 (FAF1) of Arabidopsis thaliana (Mouse-ear cress).